The following is a 192-amino-acid chain: uncharacterized protein (192 aa).

This sequence belongs to the CAPAB/TerDEXZ family.

This is an uncharacterized protein from Bacillus subtilis (strain 168).